Consider the following 102-residue polypeptide: Major basic nuclear protein 2 (102 aa).

Residues 1-11 (MKAMKATKKAM) show a composition bias toward basic residues. The tract at residues 1-43 (MKAMKATKKAMTKTGLAEALAPKPSSARRIAPPSSRAWPPSAQ) is disordered. Low complexity predominate over residues 21–42 (APKPSSARRIAPPSSRAWPPSA).

It is found in the nucleus. The protein is Major basic nuclear protein 2 (HCc2) of Crypthecodinium cohnii (Dinoflagellate).